A 144-amino-acid polypeptide reads, in one-letter code: Large ribosomal subunit protein uL15 (144 aa).

Residues 1 to 52 (MRLNTLSPAEGAKHSAKRLGRGIGSGLGKTGGRGHKGQKSRTGSGVRRGFEG) form a disordered region. Positions 21-31 (RGIGSGLGKTG) are enriched in gly residues.

This sequence belongs to the universal ribosomal protein uL15 family. In terms of assembly, part of the 50S ribosomal subunit.

Binds to the 23S rRNA. In Haemophilus influenzae (strain 86-028NP), this protein is Large ribosomal subunit protein uL15.